Consider the following 388-residue polypeptide: Chorismate synthase (388 aa).

NADP(+) contacts are provided by Arg-40 and Arg-46. FMN-binding positions include 131-133 (RSS), 252-253 (NA), Gly-296, 311-315 (KPIPT), and Arg-337.

The protein belongs to the chorismate synthase family. In terms of assembly, homotetramer. FMNH2 is required as a cofactor.

It carries out the reaction 5-O-(1-carboxyvinyl)-3-phosphoshikimate = chorismate + phosphate. It functions in the pathway metabolic intermediate biosynthesis; chorismate biosynthesis; chorismate from D-erythrose 4-phosphate and phosphoenolpyruvate: step 7/7. Its function is as follows. Catalyzes the anti-1,4-elimination of the C-3 phosphate and the C-6 proR hydrogen from 5-enolpyruvylshikimate-3-phosphate (EPSP) to yield chorismate, which is the branch point compound that serves as the starting substrate for the three terminal pathways of aromatic amino acid biosynthesis. This reaction introduces a second double bond into the aromatic ring system. This chain is Chorismate synthase, found in Limosilactobacillus fermentum (strain NBRC 3956 / LMG 18251) (Lactobacillus fermentum).